The chain runs to 116 residues: Large ribosomal subunit protein bL17 (116 aa).

This sequence belongs to the bacterial ribosomal protein bL17 family. Part of the 50S ribosomal subunit. Contacts protein L32.

This is Large ribosomal subunit protein bL17 from Helicobacter pylori (strain J99 / ATCC 700824) (Campylobacter pylori J99).